The chain runs to 513 residues: Putative thymidine phosphorylase (513 aa).

It belongs to the thymidine/pyrimidine-nucleoside phosphorylase family. Type 2 subfamily.

It catalyses the reaction thymidine + phosphate = 2-deoxy-alpha-D-ribose 1-phosphate + thymine. The protein is Putative thymidine phosphorylase of Rhodopseudomonas palustris (strain BisB18).